The chain runs to 189 residues: MyoD family inhibitor domain-containing protein 2 (189 aa).

In terms of domain architecture, MDFI spans 28–188 (KEDTQLTNAK…LAMEISEICY (161 aa)).

Belongs to the MDFI family.

The protein is MyoD family inhibitor domain-containing protein 2 of Homo sapiens (Human).